A 325-amino-acid chain; its full sequence is 5-dehydro-2-deoxygluconokinase (325 aa).

The protein belongs to the carbohydrate kinase PfkB family.

It carries out the reaction 5-dehydro-2-deoxy-D-gluconate + ATP = 6-phospho-5-dehydro-2-deoxy-D-gluconate + ADP + H(+). The protein operates within polyol metabolism; myo-inositol degradation into acetyl-CoA; acetyl-CoA from myo-inositol: step 5/7. Its function is as follows. Catalyzes the phosphorylation of 5-dehydro-2-deoxy-D-gluconate (2-deoxy-5-keto-D-gluconate or DKG) to 6-phospho-5-dehydro-2-deoxy-D-gluconate (DKGP). The protein is 5-dehydro-2-deoxygluconokinase of Bacillus licheniformis (strain ATCC 14580 / DSM 13 / JCM 2505 / CCUG 7422 / NBRC 12200 / NCIMB 9375 / NCTC 10341 / NRRL NRS-1264 / Gibson 46).